Here is a 228-residue protein sequence, read N- to C-terminus: MEEKKQQNVTIKGTKDGITLHLDDCCSFSELLMELDEKLSTHYYDGDGRSLIEVHVKVGNRYLTEVQQEEIRTLIRNKKNLVVDSIESDVITKAEAIAWKEETEIVPISKIVRSGQVLHVKGNLLLIGDVNPGGTVIAGGNIFVVGSLRGIAHAGYYGDSDAVIAASVMNPMQLRISDVAMRAPEEKEDGAEAAECAYINENNHIVVDRLQLLTHLRPNLTKLERGIV.

It belongs to the MinC family. As to quaternary structure, interacts with MinD and FtsZ.

Its function is as follows. Cell division inhibitor that blocks the formation of polar Z ring septums. Rapidly oscillates between the poles of the cell to destabilize FtsZ filaments that have formed before they mature into polar Z rings. Prevents FtsZ polymerization. The protein is Probable septum site-determining protein MinC of Bacillus cereus (strain B4264).